A 246-amino-acid chain; its full sequence is METTLFKPALWQIPHIGSGGETALAEKTETLKQRLHRIVGSHRDARFASSLAAEDMVITDLIAGENLNIGIFTLDTGLLHTETLNLLDRLGRAYPHLRIKRFRPVREDADRYVESKGRFAFYDSVEARRECCRIRKTEPLNRAIAGADAWLTGQRREQSATRTELPFAEYDAGRGIGKYNPIFDWSEHDVWAYILANNVPYNDLYRQGFPSIGCDPCTRPVKAGEDIRAGRWWWEGRNSKECGLHK.

4 residues coordinate [4Fe-4S] cluster: Cys131, Cys132, Cys214, and Cys217. Cys242 (nucleophile; cysteine thiosulfonate intermediate) is an active-site residue.

It belongs to the PAPS reductase family. CysH subfamily. [4Fe-4S] cluster is required as a cofactor.

It localises to the cytoplasm. The enzyme catalyses [thioredoxin]-disulfide + sulfite + AMP + 2 H(+) = adenosine 5'-phosphosulfate + [thioredoxin]-dithiol. The protein operates within sulfur metabolism; hydrogen sulfide biosynthesis; sulfite from sulfate. In terms of biological role, catalyzes the formation of sulfite from adenosine 5'-phosphosulfate (APS) using thioredoxin as an electron donor. In Neisseria meningitidis serogroup B (strain ATCC BAA-335 / MC58), this protein is Adenosine 5'-phosphosulfate reductase.